Reading from the N-terminus, the 217-residue chain is UPF0502 protein VFMJ11_A0613 (217 aa).

It belongs to the UPF0502 family.

In Aliivibrio fischeri (strain MJ11) (Vibrio fischeri), this protein is UPF0502 protein VFMJ11_A0613.